Reading from the N-terminus, the 259-residue chain is uncharacterized protein (259 aa).

One can recognise an HD domain in the interval 51–173 (GKTHAKIVAN…IAVADGTDMT (123 aa)).

This is an uncharacterized protein from Methanocaldococcus jannaschii (strain ATCC 43067 / DSM 2661 / JAL-1 / JCM 10045 / NBRC 100440) (Methanococcus jannaschii).